Consider the following 922-residue polypeptide: Band 3 anion transport protein (922 aa).

2 disordered regions span residues 1–36 (MEGPGQDTEDALRRSLDPEGYEDTKGSRTSLGTMSN) and 355–389 (QHPDTVRSPGGPTAPKDTGDKGQAPQDDDPLLRTR). The Cytoplasmic portion of the chain corresponds to 1–416 (MEGPGQDTED…LSDIRDALNP (416 aa)). Over residues 10–26 (DALRRSLDPEGYEDTKG) the composition is skewed to basic and acidic residues. Positions 27–36 (SRTSLGTMSN) are enriched in polar residues. The chain crosses the membrane as a helical span at residues 417 to 440 (QCLAAVIFIYFAALSPAITFGGLL). Residues 441-448 (GEKTRGMM) lie on the Extracellular side of the membrane. The helical transmembrane segment at 449-469 (GVSELLLSTSVQCLLFSLLSA) threads the bilayer. Residues 470–472 (QPL) are Cytoplasmic-facing. Residues 473–489 (LVVGFSGPLLVFEEAFF) form a discontinuously helical membrane-spanning segment. The Extracellular segment spans residues 490-498 (RFCEDHGLE). A helical transmembrane segment spans residues 499-519 (YIVGRVWIGFWLILLVLLVVA). Over 520 to 531 (CEGTVLVRYLSR) the chain is Cytoplasmic. The helical transmembrane segment at 532–554 (YTQEIFSFLISLIFIYETFAKLV) threads the bilayer. The Extracellular portion of the chain corresponds to 555–581 (TIFEAHPLQQSYDTDVSTEPSVPKPNT). Residues 582–602 (ALLSLVLMAGTFFLALFLRQF) form a helical membrane-spanning segment. Topologically, residues 603–613 (KNSVFLPGKVR) are cytoplasmic. A helical membrane pass occupies residues 614-634 (RLIGDFGVPISIFVMALADFF). At 635-674 (IKDTYTQKLKVPRGLEVTNGTARGWFIHPMGSATPFPIWM) the chain is on the extracellular side. Residue Asn-653 is glycosylated (N-linked (GlcNAc...) asparagine). The chain crosses the membrane as a helical span at residues 675–695 (MFASPVPALLVFILIFLETQI). Residues 696-711 (TTLIVSKPERKLVKGS) are Cytoplasmic-facing. Residues 712-730 (GFHLDLLLIVAMGGLAALF) form a helical membrane-spanning segment. A discontinuously helical membrane pass occupies residues 731-748 (GMPWLSATTVRTITHANA). The Cytoplasmic portion of the chain corresponds to 749-771 (LTVVGKSAVPGERAHIVEVKEQR). 2 consecutive transmembrane segments (helical) span residues 772 to 792 (LSGLLVAVLIGVSILMEPILK) and 793 to 811 (YIPLAVLFGIFLYMGVTSL). Residues 812 to 849 (FGIQLFDRILLLLMPPKYHPKEPYVTRVKTWRITSSPL) lie on the Cytoplasmic side of the membrane. Positions 850-880 (TQILVVALLWGVKVSPASLRCPFVLVLTVPL) form an intramembrane region, discontinuously helical. Residues 881-922 (RRLLLPRIFSEIELKCLDTDDAVVTFEEAEGQDVYNEVQMPS) lie on the Cytoplasmic side of the membrane.

This sequence belongs to the anion exchanger (TC 2.A.31) family. As to quaternary structure, a dimer in solution, it spans the membrane asymmetrically and appears to be tetrameric. As to expression, erythrocytes.

Its subcellular location is the cell membrane. The protein localises to the basolateral cell membrane. It catalyses the reaction hydrogencarbonate(in) + chloride(out) = hydrogencarbonate(out) + chloride(in). Its function is as follows. Functions both as a transporter that mediates electroneutral anion exchange across the cell membrane and as a structural protein. Major integral membrane glycoprotein of the erythrocyte membrane; required for normal flexibility and stability of the erythrocyte membrane and for normal erythrocyte shape via the interactions of its cytoplasmic domain with cytoskeletal proteins, glycolytic enzymes, and hemoglobin. Functions as a transporter that mediates the 1:1 exchange of inorganic anions across the erythrocyte membrane. Mediates chloride-bicarbonate exchange in the kidney, and is required for normal acidification of the urine. The sequence is that of Band 3 anion transport protein (SLC4A1) from Gallus gallus (Chicken).